The chain runs to 297 residues: Aspartate carbamoyltransferase catalytic subunit (297 aa).

Residues R49 and T50 each contribute to the carbamoyl phosphate site. Position 77 (K77) interacts with L-aspartate. 3 residues coordinate carbamoyl phosphate: R99, H129, and Q132. R162 and R215 together coordinate L-aspartate. 2 residues coordinate carbamoyl phosphate: G256 and P257.

The protein belongs to the aspartate/ornithine carbamoyltransferase superfamily. ATCase family. In terms of assembly, heterododecamer (2C3:3R2) of six catalytic PyrB chains organized as two trimers (C3), and six regulatory PyrI chains organized as three dimers (R2).

It catalyses the reaction carbamoyl phosphate + L-aspartate = N-carbamoyl-L-aspartate + phosphate + H(+). It participates in pyrimidine metabolism; UMP biosynthesis via de novo pathway; (S)-dihydroorotate from bicarbonate: step 2/3. Functionally, catalyzes the condensation of carbamoyl phosphate and aspartate to form carbamoyl aspartate and inorganic phosphate, the committed step in the de novo pyrimidine nucleotide biosynthesis pathway. The chain is Aspartate carbamoyltransferase catalytic subunit from Legionella pneumophila (strain Corby).